Reading from the N-terminus, the 450-residue chain is Phosphoglucosamine mutase (450 aa).

Ser107 acts as the Phosphoserine intermediate in catalysis. Residues Ser107, Asp246, Asp248, and Asp250 each coordinate Mg(2+). Ser107 carries the post-translational modification Phosphoserine.

Belongs to the phosphohexose mutase family. Mg(2+) is required as a cofactor. In terms of processing, activated by phosphorylation.

The enzyme catalyses alpha-D-glucosamine 1-phosphate = D-glucosamine 6-phosphate. Catalyzes the conversion of glucosamine-6-phosphate to glucosamine-1-phosphate. The protein is Phosphoglucosamine mutase of Dechloromonas aromatica (strain RCB).